The primary structure comprises 309 residues: Putative pyridoxal kinase C6F6.11c (309 aa).

Residues Ser12 and Tyr123 each contribute to the substrate site. Residues Ser182–Ser183 and Leu209–Gly221 each bind ATP. Asp222 lines the substrate pocket.

The protein belongs to the pyridoxine kinase family. A divalent metal cation is required as a cofactor.

It localises to the cytoplasm. The protein localises to the nucleus. The enzyme catalyses pyridoxal + ATP = pyridoxal 5'-phosphate + ADP + H(+). Required for synthesis of pyridoxal-5-phosphate from vitamin B6. The sequence is that of Putative pyridoxal kinase C6F6.11c from Schizosaccharomyces pombe (strain 972 / ATCC 24843) (Fission yeast).